The chain runs to 420 residues: UDP-N-acetylglucosamine 1-carboxyvinyltransferase (420 aa).

Phosphoenolpyruvate is bound at residue 22 to 23 (KN). Arginine 93 contributes to the UDP-N-acetyl-alpha-D-glucosamine binding site. Cysteine 117 serves as the catalytic Proton donor. Cysteine 117 is modified (2-(S-cysteinyl)pyruvic acid O-phosphothioketal). UDP-N-acetyl-alpha-D-glucosamine-binding residues include aspartate 307 and isoleucine 329.

This sequence belongs to the EPSP synthase family. MurA subfamily.

Its subcellular location is the cytoplasm. The enzyme catalyses phosphoenolpyruvate + UDP-N-acetyl-alpha-D-glucosamine = UDP-N-acetyl-3-O-(1-carboxyvinyl)-alpha-D-glucosamine + phosphate. It participates in cell wall biogenesis; peptidoglycan biosynthesis. Cell wall formation. Adds enolpyruvyl to UDP-N-acetylglucosamine. This is UDP-N-acetylglucosamine 1-carboxyvinyltransferase from Cellvibrio japonicus (strain Ueda107) (Pseudomonas fluorescens subsp. cellulosa).